We begin with the raw amino-acid sequence, 147 residues long: 3-dehydroquinate dehydratase (147 aa).

Residue Y23 is the Proton acceptor of the active site. Substrate-binding residues include N74, H80, and D87. H100 (proton donor) is an active-site residue. Residues 101–102 and R111 each bind substrate; that span reads IS.

It belongs to the type-II 3-dehydroquinase family. Homododecamer.

The enzyme catalyses 3-dehydroquinate = 3-dehydroshikimate + H2O. It participates in metabolic intermediate biosynthesis; chorismate biosynthesis; chorismate from D-erythrose 4-phosphate and phosphoenolpyruvate: step 3/7. Catalyzes a trans-dehydration via an enolate intermediate. The sequence is that of 3-dehydroquinate dehydratase from Prochlorococcus marinus (strain MIT 9215).